A 258-amino-acid chain; its full sequence is Imidazole glycerol phosphate synthase subunit HisF (258 aa).

Catalysis depends on residues D11 and D130.

It belongs to the HisA/HisF family. As to quaternary structure, heterodimer of HisH and HisF.

The protein resides in the cytoplasm. It carries out the reaction 5-[(5-phospho-1-deoxy-D-ribulos-1-ylimino)methylamino]-1-(5-phospho-beta-D-ribosyl)imidazole-4-carboxamide + L-glutamine = D-erythro-1-(imidazol-4-yl)glycerol 3-phosphate + 5-amino-1-(5-phospho-beta-D-ribosyl)imidazole-4-carboxamide + L-glutamate + H(+). Its pathway is amino-acid biosynthesis; L-histidine biosynthesis; L-histidine from 5-phospho-alpha-D-ribose 1-diphosphate: step 5/9. In terms of biological role, IGPS catalyzes the conversion of PRFAR and glutamine to IGP, AICAR and glutamate. The HisF subunit catalyzes the cyclization activity that produces IGP and AICAR from PRFAR using the ammonia provided by the HisH subunit. This Xanthomonas euvesicatoria pv. vesicatoria (strain 85-10) (Xanthomonas campestris pv. vesicatoria) protein is Imidazole glycerol phosphate synthase subunit HisF.